We begin with the raw amino-acid sequence, 171 residues long: Large ribosomal subunit protein bL9 (171 aa).

Belongs to the bacterial ribosomal protein bL9 family.

Functionally, binds to the 23S rRNA. The polypeptide is Large ribosomal subunit protein bL9 (Rickettsia felis (strain ATCC VR-1525 / URRWXCal2) (Rickettsia azadi)).